The chain runs to 236 residues: Carbonyl reductase family member 4 (236 aa).

NADP(+)-binding positions include 11-14 (SRGI), 34-35 (RN), Asp-55, and 82-84 (SAG). Residue Ser-134 coordinates substrate. Residues Tyr-147, Lys-151, and 180 to 182 (IRT) contribute to the NADP(+) site. The active-site Proton acceptor is Tyr-147.

Belongs to the short-chain dehydrogenases/reductases (SDR) family. As to quaternary structure, homotetramer (in vitro). Heterotetramer with HSD17B8; contains two molecules each of HSD17B8 and CBR4.

It localises to the mitochondrion matrix. It participates in lipid metabolism; fatty acid biosynthesis. Its function is as follows. The heterotetramer with HSD17B8 has NADH-dependent 3-ketoacyl-acyl carrier protein reductase activity, and thereby plays a role in mitochondrial fatty acid biosynthesis. Within the heterotetramer, HSD17B8 binds NADH; CBR4 binds NADPD. The homotetramer has NADPH-dependent quinone reductase activity. Both homotetramer and the heterotetramer have broad in vitro substrate specificity and can reduce 9,10-phenanthrenequinone, 1,4-benzoquinone and various other o-quinones and p-quinones. The sequence is that of Carbonyl reductase family member 4 (cbr4) from Xenopus laevis (African clawed frog).